The primary structure comprises 625 residues: Chaperone protein HtpG (625 aa).

An a; substrate-binding region spans residues 1 to 341 (MEKKQFQAES…SEDLSLNISR (341 aa)). The tract at residues 342-551 (EMLQHDRQLK…DGEITLEMEK (210 aa)) is b. The tract at residues 552-625 (VLQAMPDNQN…FSQNMCKVMV (74 aa)) is c.

It belongs to the heat shock protein 90 family. In terms of assembly, homodimer.

It is found in the cytoplasm. Its function is as follows. Molecular chaperone. Has ATPase activity. This chain is Chaperone protein HtpG, found in Shouchella clausii (strain KSM-K16) (Alkalihalobacillus clausii).